Here is a 487-residue protein sequence, read N- to C-terminus: Mu-like prophage FluMu tail sheath protein (487 aa).

The protein belongs to the myoviridae tail sheath protein family.

Major component of the tail. The sequence is that of Mu-like prophage FluMu tail sheath protein from Haemophilus influenzae (strain ATCC 51907 / DSM 11121 / KW20 / Rd).